A 535-amino-acid polypeptide reads, in one-letter code: Bifunctional purine biosynthesis protein PurH (535 aa).

One can recognise an MGS-like domain in the interval 6–151; the sequence is TRLPVRRALI…KNHKDVAIVV (146 aa).

Belongs to the PurH family.

The catalysed reaction is (6R)-10-formyltetrahydrofolate + 5-amino-1-(5-phospho-beta-D-ribosyl)imidazole-4-carboxamide = 5-formamido-1-(5-phospho-D-ribosyl)imidazole-4-carboxamide + (6S)-5,6,7,8-tetrahydrofolate. It carries out the reaction IMP + H2O = 5-formamido-1-(5-phospho-D-ribosyl)imidazole-4-carboxamide. Its pathway is purine metabolism; IMP biosynthesis via de novo pathway; 5-formamido-1-(5-phospho-D-ribosyl)imidazole-4-carboxamide from 5-amino-1-(5-phospho-D-ribosyl)imidazole-4-carboxamide (10-formyl THF route): step 1/1. The protein operates within purine metabolism; IMP biosynthesis via de novo pathway; IMP from 5-formamido-1-(5-phospho-D-ribosyl)imidazole-4-carboxamide: step 1/1. This Pseudomonas putida (strain ATCC 700007 / DSM 6899 / JCM 31910 / BCRC 17059 / LMG 24140 / F1) protein is Bifunctional purine biosynthesis protein PurH.